Reading from the N-terminus, the 511-residue chain is Limonoid UDP-glucosyltransferase (511 aa).

Residue His-19 is the Proton acceptor of the active site. His-19 contacts an anthocyanidin. UDP-alpha-D-glucose is bound by residues Gln-344, His-359, Trp-362, Asn-363, Ser-364, and Glu-367. An anthocyanidin is bound at residue Gly-382. UDP-alpha-D-glucose-binding residues include Asp-383 and Gln-384.

It belongs to the UDP-glycosyltransferase family.

It catalyses the reaction limonin + UDP-alpha-D-glucose + H2O = limonin 17-beta-D-glucoside + UDP + 2 H(+). Functionally, involved in the glucosylation of limonoids. This chain is Limonoid UDP-glucosyltransferase, found in Citrus unshiu (Satsuma mandarin).